The following is a 316-amino-acid chain: Methionyl-tRNA formyltransferase (316 aa).

109-112 contacts (6S)-5,6,7,8-tetrahydrofolate; it reads SLLP.

This sequence belongs to the Fmt family.

The catalysed reaction is L-methionyl-tRNA(fMet) + (6R)-10-formyltetrahydrofolate = N-formyl-L-methionyl-tRNA(fMet) + (6S)-5,6,7,8-tetrahydrofolate + H(+). Attaches a formyl group to the free amino group of methionyl-tRNA(fMet). The formyl group appears to play a dual role in the initiator identity of N-formylmethionyl-tRNA by promoting its recognition by IF2 and preventing the misappropriation of this tRNA by the elongation apparatus. The sequence is that of Methionyl-tRNA formyltransferase from Nitrosomonas eutropha (strain DSM 101675 / C91 / Nm57).